The chain runs to 70 residues: MFTLKKSLLLLFFLGTISLSLCEQERSAEDEGEVIEEEVKRGFMDTAKNVAKNVAVTLLDKLKCKITGGC.

Positions 1–22 (MFTLKKSLLLLFFLGTISLSLC) are cleaved as a signal peptide. Positions 23 to 39 (EQERSAEDEGEVIEEEV) are cleaved as a propeptide — removed in mature form. Cysteines 64 and 70 form a disulfide.

As to expression, expressed by the skin glands.

The protein localises to the secreted. In terms of biological role, has antimicrobial activity against Gram-negative bacterium E.coli ATCC 8739 (MIC=100 ug), against Gram positive bacteria S.aureus ATCC 6538 (MIC=25 ug), methicillin-resistant S.aureus ATCC 43300 (MIC=100 ug), B.subtilis ATCC 6633 (MIC=12.5 ug) and against fungus C.albicans ATCC 90028 (MIC=100 ug). This Odorrana ishikawae (Ishikawa's frog) protein is Palustrin-2ISa.